Here is a 299-residue protein sequence, read N- to C-terminus: GTPase Era (299 aa).

The Era-type G domain occupies 4–171 (KSGFVAILGR…VDILSENLEE (168 aa)). The G1 stretch occupies residues 12–19 (GRPNVGKS). 12 to 19 (GRPNVGKS) is a GTP binding site. The segment at 38–42 (QTTRN) is G2. The segment at 59 to 62 (DTPG) is G3. GTP is bound by residues 59–63 (DTPGI) and 121–124 (NKID). The G4 stretch occupies residues 121–124 (NKID). The tract at residues 150-152 (ISA) is G5. The KH type-2 domain occupies 202–280 (TREEIPHSVA…FLETWVKVKK (79 aa)).

This sequence belongs to the TRAFAC class TrmE-Era-EngA-EngB-Septin-like GTPase superfamily. Era GTPase family. Monomer.

It localises to the cytoplasm. Its subcellular location is the cell membrane. An essential GTPase that binds both GDP and GTP, with rapid nucleotide exchange. Plays a role in 16S rRNA processing and 30S ribosomal subunit biogenesis and possibly also in cell cycle regulation and energy metabolism. This chain is GTPase Era, found in Streptococcus gordonii (strain Challis / ATCC 35105 / BCRC 15272 / CH1 / DL1 / V288).